Consider the following 562-residue polypeptide: Serine/threonine-protein kinase dst3 (562 aa).

The Protein kinase domain maps to 23-285; sequence FQIVEVVGSG…AQQLLSHPFI (263 aa). ATP contacts are provided by residues 29-37 and lysine 59; that span reads VGSGSFGTV. Residue aspartate 154 is the Proton acceptor of the active site. Disordered regions lie at residues 316 to 339 and 366 to 562; these read LEEQ…TRAS and SIMR…NVNI. The segment covering 322–339 has biased composition (polar residues); the sequence is QRNSSGSKMVSSVPTRAS. 3 stretches are compositionally biased toward low complexity: residues 421–431, 442–454, and 476–494; these read NNNNNNNNTTT, QQQQ…NNNK, and TTPT…TTKT. Positions 495–522 are enriched in polar residues; sequence GSSLNIKPTNNVNRSTISIGQQKSPLQS. Residues 542 to 562 are compositionally biased toward acidic residues; that stretch reads EDEEDEEEFNHEDYEEINVNI.

It belongs to the protein kinase superfamily. STE Ser/Thr protein kinase family. STE20 subfamily. The cofactor is Mg(2+).

The catalysed reaction is L-seryl-[protein] + ATP = O-phospho-L-seryl-[protein] + ADP + H(+). It catalyses the reaction L-threonyl-[protein] + ATP = O-phospho-L-threonyl-[protein] + ADP + H(+). The polypeptide is Serine/threonine-protein kinase dst3 (Dictyostelium discoideum (Social amoeba)).